The following is a 453-amino-acid chain: Aspartic proteinase PCS1 (453 aa).

An N-terminal signal peptide occupies residues 1–18 (MFSRFHALFLLLVLSVRT). A propeptide spans 19–57 (YKCVSSSSSSSSSFSFSSFSSSSSSQTLVLPLKTRITPT) (activation peptide). 2 N-linked (GlcNAc...) asparagine glycosylation sites follow: N70 and N85. The Peptidase A1 domain maps to 73-438 (LTVTLTVGTP…DLQRSRIGLA (366 aa)). Residue D91 is part of the active site. Residues N102, N175, N178, and N243 are each glycosylated (N-linked (GlcNAc...) asparagine). D304 is an active-site residue. N-linked (GlcNAc...) asparagine glycans are attached at residues N326 and N395.

This sequence belongs to the peptidase A1 family. As to expression, expressed specifically in developing gametophytes and developing seeds.

It localises to the endoplasmic reticulum. Functionally, embryo-specific aspartic protease that limits programmed cell death during reproductive development. Possesses peptidase activity toward casein in vitro. The polypeptide is Aspartic proteinase PCS1 (PCS1) (Arabidopsis thaliana (Mouse-ear cress)).